A 159-amino-acid polypeptide reads, in one-letter code: ATP synthase subunit b (159 aa).

A helical membrane pass occupies residues 8-28 (ILATIINFIILILILKHFFWD).

The protein belongs to the ATPase B chain family. F-type ATPases have 2 components, F(1) - the catalytic core - and F(0) - the membrane proton channel. F(1) has five subunits: alpha(3), beta(3), gamma(1), delta(1), epsilon(1). F(0) has three main subunits: a(1), b(2) and c(10-14). The alpha and beta chains form an alternating ring which encloses part of the gamma chain. F(1) is attached to F(0) by a central stalk formed by the gamma and epsilon chains, while a peripheral stalk is formed by the delta and b chains.

It is found in the cell membrane. In terms of biological role, f(1)F(0) ATP synthase produces ATP from ADP in the presence of a proton or sodium gradient. F-type ATPases consist of two structural domains, F(1) containing the extramembraneous catalytic core and F(0) containing the membrane proton channel, linked together by a central stalk and a peripheral stalk. During catalysis, ATP synthesis in the catalytic domain of F(1) is coupled via a rotary mechanism of the central stalk subunits to proton translocation. Component of the F(0) channel, it forms part of the peripheral stalk, linking F(1) to F(0). The chain is ATP synthase subunit b from Clostridium perfringens (strain ATCC 13124 / DSM 756 / JCM 1290 / NCIMB 6125 / NCTC 8237 / Type A).